The chain runs to 288 residues: Release factor glutamine methyltransferase (288 aa).

2 residues coordinate S-adenosyl-L-methionine: Asp142 and Asn186. 186-189 (NPPY) contacts substrate.

This sequence belongs to the protein N5-glutamine methyltransferase family. PrmC subfamily.

It catalyses the reaction L-glutaminyl-[peptide chain release factor] + S-adenosyl-L-methionine = N(5)-methyl-L-glutaminyl-[peptide chain release factor] + S-adenosyl-L-homocysteine + H(+). Functionally, methylates the class 1 translation termination release factors RF1/PrfA and RF2/PrfB on the glutamine residue of the universally conserved GGQ motif. This Mycobacterium leprae (strain TN) protein is Release factor glutamine methyltransferase.